The following is a 211-amino-acid chain: Small ribosomal subunit protein uS5 (211 aa).

Residues 58–121 (FEERIVKLKR…KKAHNSIHTV (64 aa)) enclose the S5 DRBM domain.

This sequence belongs to the universal ribosomal protein uS5 family. In terms of assembly, part of the 30S ribosomal subunit. Contacts proteins S4 and S8.

Functionally, with S4 and S12 plays an important role in translational accuracy. Its function is as follows. Located at the back of the 30S subunit body where it stabilizes the conformation of the head with respect to the body. In Mycoplasma genitalium (strain ATCC 33530 / DSM 19775 / NCTC 10195 / G37) (Mycoplasmoides genitalium), this protein is Small ribosomal subunit protein uS5.